The chain runs to 170 residues: Photosystem II extrinsic protein V (170 aa).

The N-terminal stretch at 1–34 (MNKILGIDPLKKFIFGISAFVLLFWQLNVGAANA) is a signal peptide. Heme c-binding residues include Cys-70, Cys-73, His-74, and His-125.

The protein belongs to the cytochrome c family. PsbV subfamily. As to quaternary structure, PSII is composed of 1 copy each of membrane proteins PsbA, PsbB, PsbC, PsbD, PsbE, PsbF, PsbH, PsbI, PsbJ, PsbK, PsbL, PsbM, PsbT, PsbX, PsbY, PsbZ, Psb30/Ycf12, peripheral proteins PsbO, CyanoQ (PsbQ), PsbU, PsbV and a large number of cofactors. It forms dimeric complexes. Heme c is required as a cofactor.

It is found in the cellular thylakoid membrane. One of the extrinsic, lumenal subunits of photosystem II (PSII). PSII is a light-driven water plastoquinone oxidoreductase, using light energy to abstract electrons from H(2)O, generating a proton gradient subsequently used for ATP formation. The extrinsic proteins stabilize the structure of photosystem II oxygen-evolving complex (OEC), the ion environment of oxygen evolution and protect the OEC against heat-induced inactivation. Low-potential cytochrome c that plays a role in the OEC of PSII. The polypeptide is Photosystem II extrinsic protein V (Picosynechococcus sp. (strain ATCC 27264 / PCC 7002 / PR-6) (Agmenellum quadruplicatum)).